A 46-amino-acid polypeptide reads, in one-letter code: MVKVYVLVDNKVVDLRPPGMKAEWGFSAYIDAKEPVLMDSGIRYRL.

This is an uncharacterized protein from Archaeoglobus fulgidus (strain ATCC 49558 / DSM 4304 / JCM 9628 / NBRC 100126 / VC-16).